The primary structure comprises 611 residues: Dehydrogenase pkfF (611 aa).

Positions 1–19 (MRHTALLPLVSSFIVPALA) are cleaved as a signal peptide. Residues N28 and N38 are each glycosylated (N-linked (GlcNAc...) asparagine). FAD contacts are provided by residues 50-51 (TS), 71-72 (EA), and 137-140 (HYMV). N180, N187, N240, N272, N409, and N471 each carry an N-linked (GlcNAc...) asparagine glycan. H547 serves as the catalytic Proton acceptor. FAD is bound by residues A581 and 592-593 (PQ).

It belongs to the GMC oxidoreductase family. FAD is required as a cofactor.

Its pathway is secondary metabolite biosynthesis. Dehydrogenase; part of the gene cluster that mediates the biosynthesis of aspernidine A, a prenylated isoindolinone. The starting point of the biosynthesis of aspernidin A is the production of orsellinaldehyde by the non-reducing polyketide synthase pkfA. Hydroxylation, methylation of one of the phenol groups, and prenylation, presumably catalyzed by the prenyltransferase pkfE, would be needed to yield aspernidine D. Subsequently, the cytochrome P450 monooxygenase pkfB is responsible for hydroxylation of aspernidine D to yield aspernidine E. The dehydrogenase pkfF may be responsible for further oxidation of aspernidine E to form a dialdehyde intermediate which is further transformed in a series of steps, some of which are enzyme-mediated, to generate aspernidine A. The possibility that additional enzymes outside of the cluster are involved in aspernidine A biosynthesis cannot be excluded. The protein is Dehydrogenase pkfF of Emericella nidulans (strain FGSC A4 / ATCC 38163 / CBS 112.46 / NRRL 194 / M139) (Aspergillus nidulans).